Here is a 535-residue protein sequence, read N- to C-terminus: Light-independent protochlorophyllide reductase subunit B (535 aa).

Aspartate 36 contacts [4Fe-4S] cluster. Aspartate 287 serves as the catalytic Proton donor. Residue 422-423 (GL) participates in substrate binding.

It belongs to the ChlB/BchB/BchZ family. In terms of assembly, protochlorophyllide reductase is composed of three subunits; BchL, BchN and BchB. Forms a heterotetramer of two BchB and two BchN subunits. Requires [4Fe-4S] cluster as cofactor.

It carries out the reaction chlorophyllide a + oxidized 2[4Fe-4S]-[ferredoxin] + 2 ADP + 2 phosphate = protochlorophyllide a + reduced 2[4Fe-4S]-[ferredoxin] + 2 ATP + 2 H2O. It functions in the pathway porphyrin-containing compound metabolism; bacteriochlorophyll biosynthesis (light-independent). Its function is as follows. Component of the dark-operative protochlorophyllide reductase (DPOR) that uses Mg-ATP and reduced ferredoxin to reduce ring D of protochlorophyllide (Pchlide) to form chlorophyllide a (Chlide). This reaction is light-independent. The NB-protein (BchN-BchB) is the catalytic component of the complex. The protein is Light-independent protochlorophyllide reductase subunit B of Rhodopseudomonas palustris (strain BisB5).